The chain runs to 319 residues: 7,8-didemethyl-8-hydroxy-5-deazariboflavin synthase (319 aa).

A Radical SAM core domain is found at 6–236 (VTYSPAFTLV…AEITIQIPPN (231 aa)). Residues C20, C24, and C27 each contribute to the [4Fe-4S] cluster site.

It belongs to the radical SAM superfamily. CofG family. In terms of assembly, consists of two subunits, CofG and CofH. The cofactor is [4Fe-4S] cluster.

It catalyses the reaction 5-amino-5-(4-hydroxybenzyl)-6-(D-ribitylimino)-5,6-dihydrouracil + S-adenosyl-L-methionine = 7,8-didemethyl-8-hydroxy-5-deazariboflavin + 5'-deoxyadenosine + L-methionine + NH4(+) + H(+). It functions in the pathway cofactor biosynthesis; coenzyme F0 biosynthesis. Its function is as follows. Catalyzes the radical-mediated synthesis of 7,8-didemethyl-8-hydroxy-5-deazariboflavin from 5-amino-5-(4-hydroxybenzyl)-6-(D-ribitylimino)-5,6-dihydrouracil. The protein is 7,8-didemethyl-8-hydroxy-5-deazariboflavin synthase of Gloeobacter violaceus (strain ATCC 29082 / PCC 7421).